The sequence spans 43 residues: Disintegrin CV (43 aa).

Cystine bridges form between cysteine 1/cysteine 10, cysteine 6/cysteine 29, cysteine 7/cysteine 34, and cysteine 19/cysteine 36. Residues 1–43 enclose the Disintegrin domain; sequence CTTGPCCRQCKLKPAGTTCWRTSVSSHYCTGRSCECPSYPGNG. The Cell attachment site; atypical (RTS) signature appears at 21–23; that stretch reads RTS.

Belongs to the disintegrin family. Short disintegrin subfamily. Monomer. Expressed by the venom gland.

Its subcellular location is the secreted. Functionally, specifically interacts with the alpha-1/beta-1 integrin (ITGA1/ITGB1). Exhibits highly inhibitory effects on cell adhesion and cell migration to collagens I and IV. Also shows in vivo anti-angiogenic activity. This chain is Disintegrin CV, found in Cerastes vipera (Sahara sand viper).